Consider the following 277-residue polypeptide: 4-hydroxy-3-methylbut-2-enyl diphosphate reductase (277 aa).

Cysteine 12 is a binding site for [4Fe-4S] cluster. Residues histidine 36 and histidine 70 each coordinate (2E)-4-hydroxy-3-methylbut-2-enyl diphosphate. Residues histidine 36 and histidine 70 each coordinate dimethylallyl diphosphate. Residues histidine 36 and histidine 70 each contribute to the isopentenyl diphosphate site. Residue cysteine 92 coordinates [4Fe-4S] cluster. Histidine 120 is a (2E)-4-hydroxy-3-methylbut-2-enyl diphosphate binding site. Histidine 120 contacts dimethylallyl diphosphate. Histidine 120 is a binding site for isopentenyl diphosphate. Glutamate 122 acts as the Proton donor in catalysis. Threonine 158 provides a ligand contact to (2E)-4-hydroxy-3-methylbut-2-enyl diphosphate. Cysteine 186 is a [4Fe-4S] cluster binding site. Positions 214, 216, and 258 each coordinate (2E)-4-hydroxy-3-methylbut-2-enyl diphosphate. Dimethylallyl diphosphate is bound by residues serine 214, asparagine 216, and serine 258. 3 residues coordinate isopentenyl diphosphate: serine 214, asparagine 216, and serine 258.

The protein belongs to the IspH family. [4Fe-4S] cluster is required as a cofactor.

The enzyme catalyses isopentenyl diphosphate + 2 oxidized [2Fe-2S]-[ferredoxin] + H2O = (2E)-4-hydroxy-3-methylbut-2-enyl diphosphate + 2 reduced [2Fe-2S]-[ferredoxin] + 2 H(+). It catalyses the reaction dimethylallyl diphosphate + 2 oxidized [2Fe-2S]-[ferredoxin] + H2O = (2E)-4-hydroxy-3-methylbut-2-enyl diphosphate + 2 reduced [2Fe-2S]-[ferredoxin] + 2 H(+). It functions in the pathway isoprenoid biosynthesis; dimethylallyl diphosphate biosynthesis; dimethylallyl diphosphate from (2E)-4-hydroxy-3-methylbutenyl diphosphate: step 1/1. Its pathway is isoprenoid biosynthesis; isopentenyl diphosphate biosynthesis via DXP pathway; isopentenyl diphosphate from 1-deoxy-D-xylulose 5-phosphate: step 6/6. In terms of biological role, catalyzes the conversion of 1-hydroxy-2-methyl-2-(E)-butenyl 4-diphosphate (HMBPP) into a mixture of isopentenyl diphosphate (IPP) and dimethylallyl diphosphate (DMAPP). Acts in the terminal step of the DOXP/MEP pathway for isoprenoid precursor biosynthesis. The sequence is that of 4-hydroxy-3-methylbut-2-enyl diphosphate reductase from Campylobacter jejuni subsp. jejuni serotype O:23/36 (strain 81-176).